The chain runs to 738 residues: Translation initiation factor IF-2 (738 aa).

Residues 1–10 are compositionally biased toward polar residues; it reads MNSMRISGHQ. Positions 1-150 are disordered; the sequence is MNSMRISGHQ…PTTVRAPVRP (150 aa). The span at 22-102 shows a compositional bias: gly residues; that stretch reads AGGGRGPGNP…GGRGPSGGRG (81 aa). Residues 103 to 120 are compositionally biased toward basic and acidic residues; sequence GDGRRREESPTDHEDGRI. Residues 121-143 show a composition bias toward low complexity; sequence NRSGRSTSTTTTRTSSTLARPTT. One can recognise a tr-type G domain in the interval 238–405; sequence PRPPVVTIMG…MILLVADLNE (168 aa). A G1 region spans residues 247-254; sequence GHVDHGKT. Residue 247–254 coordinates GTP; that stretch reads GHVDHGKT. Positions 272-276 are G2; it reads GITQH. The interval 293–296 is G3; sequence DTPG. GTP contacts are provided by residues 293-297 and 347-350; these read DTPGH and NKID. Residues 347 to 350 are G4; it reads NKID. Residues 383–385 form a G5 region; that stretch reads SAK.

Belongs to the TRAFAC class translation factor GTPase superfamily. Classic translation factor GTPase family. IF-2 subfamily.

Its subcellular location is the cytoplasm. Functionally, one of the essential components for the initiation of protein synthesis. Protects formylmethionyl-tRNA from spontaneous hydrolysis and promotes its binding to the 30S ribosomal subunits. Also involved in the hydrolysis of GTP during the formation of the 70S ribosomal complex. This chain is Translation initiation factor IF-2, found in Roseiflexus castenholzii (strain DSM 13941 / HLO8).